The sequence spans 274 residues: tRNA pseudouridine synthase A (274 aa).

Asp-60 functions as the Nucleophile in the catalytic mechanism. Tyr-118 serves as a coordination point for substrate.

It belongs to the tRNA pseudouridine synthase TruA family. Homodimer.

It catalyses the reaction uridine(38/39/40) in tRNA = pseudouridine(38/39/40) in tRNA. Its function is as follows. Formation of pseudouridine at positions 38, 39 and 40 in the anticodon stem and loop of transfer RNAs. This is tRNA pseudouridine synthase A from Picosynechococcus sp. (strain ATCC 27264 / PCC 7002 / PR-6) (Agmenellum quadruplicatum).